Here is a 406-residue protein sequence, read N- to C-terminus: Nicotinate phosphoribosyltransferase (406 aa).

His-225 carries the phosphohistidine; by autocatalysis modification.

This sequence belongs to the NAPRTase family. In terms of processing, transiently phosphorylated on a His residue during the reaction cycle. Phosphorylation strongly increases the affinity for substrates and increases the rate of nicotinate D-ribonucleotide production. Dephosphorylation regenerates the low-affinity form of the enzyme, leading to product release.

The catalysed reaction is nicotinate + 5-phospho-alpha-D-ribose 1-diphosphate + ATP + H2O = nicotinate beta-D-ribonucleotide + ADP + phosphate + diphosphate. It participates in cofactor biosynthesis; NAD(+) biosynthesis; nicotinate D-ribonucleotide from nicotinate: step 1/1. Its function is as follows. Catalyzes the synthesis of beta-nicotinate D-ribonucleotide from nicotinate and 5-phospho-D-ribose 1-phosphate at the expense of ATP. The polypeptide is Nicotinate phosphoribosyltransferase (Psychromonas ingrahamii (strain DSM 17664 / CCUG 51855 / 37)).